We begin with the raw amino-acid sequence, 456 residues long: Histidine--tRNA ligase (456 aa).

This sequence belongs to the class-II aminoacyl-tRNA synthetase family. As to quaternary structure, homodimer.

The protein localises to the cytoplasm. The enzyme catalyses tRNA(His) + L-histidine + ATP = L-histidyl-tRNA(His) + AMP + diphosphate + H(+). The polypeptide is Histidine--tRNA ligase (hisS) (Borreliella burgdorferi (strain ATCC 35210 / DSM 4680 / CIP 102532 / B31) (Borrelia burgdorferi)).